A 3184-amino-acid chain; its full sequence is WD repeat- and FYVE domain-containing protein 4 (3184 aa).

A compositionally biased stretch (basic and acidic residues) spans 1 to 18 (MEAEDLSKAEDRNEDPGS). 4 disordered regions span residues 1–39 (MEAE…QSSS), 944–993 (SHTH…QDST), 1837–1869 (VGAE…KAHP), and 2309–2335 (ALSS…NQDE). A compositionally biased stretch (polar residues) spans 981–993 (QAPQPLGESQDST). The span at 2314–2324 (RHKESQDKNDH) shows a compositional bias: basic and acidic residues. Residues 2385 to 2510 (LDKEKVTQKF…DRSKAFKSFC (126 aa)) enclose the BEACH-type PH domain. Residues 2527–2821 (SLRRYPGSDR…QLFTKPHPAR (295 aa)) form the BEACH domain. WD repeat units lie at residues 2863–2922 (MYLF…YGSD), 2923–2972 (KVLM…PRGL), 2973–3014 (RLRQ…LDHL), 3015–3057 (THVT…GQPL), 3058–3141 (ASIT…ELDV), and 3142–3184 (SIAL…SADG). The tract at residues 3107–3128 (SVPGRPAGEEPPAQPPSPRGHK) is disordered.

In terms of assembly, interacts with HSP90AB1.

Its subcellular location is the early endosome. The protein localises to the endoplasmic reticulum. Functionally, plays a critical role in the regulation of cDC1-mediated cross-presentation of viral and tumor antigens in dendritic cells. Mechanistically, acts near the plasma membrane and interacts with endosomal membranes to promote endosomal-to-cytosol antigen trafficking. Also plays a role in B-cell survival through regulation of autophagy. The protein is WD repeat- and FYVE domain-containing protein 4 (WDFY4) of Homo sapiens (Human).